Here is a 1379-residue protein sequence, read N- to C-terminus: DNA-directed RNA polymerase subunit beta (1379 aa).

This sequence belongs to the RNA polymerase beta chain family. In terms of assembly, the RNAP catalytic core consists of 2 alpha, 1 beta, 1 beta' and 1 omega subunit. When a sigma factor is associated with the core the holoenzyme is formed, which can initiate transcription.

The catalysed reaction is RNA(n) + a ribonucleoside 5'-triphosphate = RNA(n+1) + diphosphate. In terms of biological role, DNA-dependent RNA polymerase catalyzes the transcription of DNA into RNA using the four ribonucleoside triphosphates as substrates. The protein is DNA-directed RNA polymerase subunit beta of Campylobacter fetus subsp. fetus (strain 82-40).